The following is a 287-amino-acid chain: ATP synthase gamma chain (287 aa).

The protein belongs to the ATPase gamma chain family. In terms of assembly, F-type ATPases have 2 components, CF(1) - the catalytic core - and CF(0) - the membrane proton channel. CF(1) has five subunits: alpha(3), beta(3), gamma(1), delta(1), epsilon(1). CF(0) has three main subunits: a, b and c.

The protein resides in the cell inner membrane. Functionally, produces ATP from ADP in the presence of a proton gradient across the membrane. The gamma chain is believed to be important in regulating ATPase activity and the flow of protons through the CF(0) complex. The polypeptide is ATP synthase gamma chain (Salmonella agona (strain SL483)).